A 188-amino-acid polypeptide reads, in one-letter code: Large ribosomal subunit protein eL18 (188 aa).

Residue K119 forms a Glycyl lysine isopeptide (Lys-Gly) (interchain with G-Cter in SUMO2) linkage. At S130 the chain carries Phosphoserine. The disordered stretch occupies residues H151–N188. T158 bears the Phosphothreonine mark. 2 stretches are compositionally biased toward basic residues: residues S161–G171 and R178–N188. Residue K164 forms a Glycyl lysine isopeptide (Lys-Gly) (interchain with G-Cter in SUMO2) linkage.

It belongs to the eukaryotic ribosomal protein eL18 family. As to quaternary structure, component of the large ribosomal subunit.

It is found in the cytoplasm. Its subcellular location is the cytosol. The protein resides in the rough endoplasmic reticulum. In terms of biological role, component of the large ribosomal subunit. The ribosome is a large ribonucleoprotein complex responsible for the synthesis of proteins in the cell. The sequence is that of Large ribosomal subunit protein eL18 (RPL18) from Homo sapiens (Human).